The sequence spans 312 residues: Polyhedral envelope protein (312 aa).

Belongs to the baculoviridae PE family.

The protein resides in the virion membrane. Its function is as follows. Major component of the polyhedra envelope. The chain is Polyhedral envelope protein from Lymantria dispar multicapsid nuclear polyhedrosis virus (LdMNPV).